Here is a 456-residue protein sequence, read N- to C-terminus: Bifunctional protein GlmU (456 aa).

Residues 1-229 (MLNVVILAAG…GWETLGVNSR (229 aa)) form a pyrophosphorylase region. UDP-N-acetyl-alpha-D-glucosamine is bound by residues 7 to 10 (LAAG), Lys-21, Gln-73, 78 to 79 (GT), 103 to 105 (YGD), Gly-139, Glu-154, Asn-169, and Asn-227. Asp-105 serves as a coordination point for Mg(2+). Position 227 (Asn-227) interacts with Mg(2+). The tract at residues 230–250 (VQQAELERRWQQEQARRQLEA) is linker. An N-acetyltransferase region spans residues 251–456 (GVTLADPARF…EGWQRPQKKS (206 aa)). The UDP-N-acetyl-alpha-D-glucosamine site is built by Arg-333 and Lys-351. Residue His-363 is the Proton acceptor of the active site. Tyr-366 and Asn-377 together coordinate UDP-N-acetyl-alpha-D-glucosamine. Acetyl-CoA contacts are provided by residues Ala-380, 386-387 (NY), Ser-405, Ala-423, and Arg-440.

The protein in the N-terminal section; belongs to the N-acetylglucosamine-1-phosphate uridyltransferase family. This sequence in the C-terminal section; belongs to the transferase hexapeptide repeat family. In terms of assembly, homotrimer. Mg(2+) serves as cofactor.

Its subcellular location is the cytoplasm. It carries out the reaction alpha-D-glucosamine 1-phosphate + acetyl-CoA = N-acetyl-alpha-D-glucosamine 1-phosphate + CoA + H(+). The enzyme catalyses N-acetyl-alpha-D-glucosamine 1-phosphate + UTP + H(+) = UDP-N-acetyl-alpha-D-glucosamine + diphosphate. Its pathway is nucleotide-sugar biosynthesis; UDP-N-acetyl-alpha-D-glucosamine biosynthesis; N-acetyl-alpha-D-glucosamine 1-phosphate from alpha-D-glucosamine 6-phosphate (route II): step 2/2. It participates in nucleotide-sugar biosynthesis; UDP-N-acetyl-alpha-D-glucosamine biosynthesis; UDP-N-acetyl-alpha-D-glucosamine from N-acetyl-alpha-D-glucosamine 1-phosphate: step 1/1. It functions in the pathway bacterial outer membrane biogenesis; LPS lipid A biosynthesis. In terms of biological role, catalyzes the last two sequential reactions in the de novo biosynthetic pathway for UDP-N-acetylglucosamine (UDP-GlcNAc). The C-terminal domain catalyzes the transfer of acetyl group from acetyl coenzyme A to glucosamine-1-phosphate (GlcN-1-P) to produce N-acetylglucosamine-1-phosphate (GlcNAc-1-P), which is converted into UDP-GlcNAc by the transfer of uridine 5-monophosphate (from uridine 5-triphosphate), a reaction catalyzed by the N-terminal domain. This chain is Bifunctional protein GlmU, found in Bordetella petrii (strain ATCC BAA-461 / DSM 12804 / CCUG 43448).